The primary structure comprises 428 residues: RNA-binding protein 34 (428 aa).

Disordered stretches follow at residues 1 to 106 (MALR…KVKV) and 127 to 152 (DLEEIRQDQGQGRRRSQSRGKVTDGE). N6-acetyllysine is present on Lys147. RRM domains are found at residues 183 to 278 (RTVF…LASE) and 285 to 362 (RSVF…RSVN). A Glycyl lysine isopeptide (Lys-Gly) (interchain with G-Cter in SUMO2) cross-link involves residue Lys240. Ser286 carries the phosphoserine modification. The disordered stretch occupies residues 361–428 (VNKEKLKQQN…GQTKKPRKQK (68 aa)). The span at 408–428 (LMKKKKGQKKKGQTKKPRKQK) shows a compositional bias: basic residues.

Belongs to the RRM RBM34 family.

The protein localises to the nucleus. It is found in the nucleolus. The chain is RNA-binding protein 34 (Rbm34) from Rattus norvegicus (Rat).